Consider the following 380-residue polypeptide: Chaperone protein DnaJ (380 aa).

Residues 5 to 70 (DFYETLGVSK…QKRAAYDRFG (66 aa)) form the J domain. The segment at 141–219 (GKTAQIRVPT…CHGQGRVTEE (79 aa)) adopts a CR-type zinc-finger fold. Zn(2+) contacts are provided by Cys-154, Cys-157, Cys-171, Cys-174, Cys-193, Cys-196, Cys-207, and Cys-210. 4 CXXCXGXG motif repeats span residues 154–161 (CEVCSGSG), 171–178 (CATCQGSG), 193–200 (CPTCQGRG), and 207–214 (CGKCHGQG).

The protein belongs to the DnaJ family. As to quaternary structure, homodimer. It depends on Zn(2+) as a cofactor.

It is found in the cytoplasm. Functionally, participates actively in the response to hyperosmotic and heat shock by preventing the aggregation of stress-denatured proteins and by disaggregating proteins, also in an autonomous, DnaK-independent fashion. Unfolded proteins bind initially to DnaJ; upon interaction with the DnaJ-bound protein, DnaK hydrolyzes its bound ATP, resulting in the formation of a stable complex. GrpE releases ADP from DnaK; ATP binding to DnaK triggers the release of the substrate protein, thus completing the reaction cycle. Several rounds of ATP-dependent interactions between DnaJ, DnaK and GrpE are required for fully efficient folding. Also involved, together with DnaK and GrpE, in the DNA replication of plasmids through activation of initiation proteins. This Allorhizobium ampelinum (strain ATCC BAA-846 / DSM 112012 / S4) (Agrobacterium vitis (strain S4)) protein is Chaperone protein DnaJ.